A 257-amino-acid chain; its full sequence is Chymotrypsin-like elastase family member 3B (257 aa).

A signal peptide (or 3) is located at residues 1-2; that stretch reads VA. The propeptide at 3–15 is activation peptide; the sequence is SGYGPPSSHPSSR. A Peptidase S1 domain is found at 16-255; the sequence is VVNGEDAVPY…FIDWIEETIA (240 aa). An N-linked (GlcNAc...) asparagine glycan is attached at Asn-38. Cystine bridges form between Cys-45–Cys-61 and Cys-104–Cys-107. His-60 acts as the Charge relay system in catalysis. The active-site Charge relay system is the Asp-110. Cystine bridges form between Cys-144–Cys-210, Cys-175–Cys-191, and Cys-200–Cys-231. Catalysis depends on Ser-204, which acts as the Charge relay system.

The protein belongs to the peptidase S1 family. Elastase subfamily.

The enzyme catalyses Preferential cleavage: Ala-|-Xaa. Does not hydrolyze elastin.. Its function is as follows. Efficient protease with alanine specificity but only little elastolytic activity. In Macaca mulatta (Rhesus macaque), this protein is Chymotrypsin-like elastase family member 3B (CELA3B).